A 127-amino-acid chain; its full sequence is Aspartate 1-decarboxylase (127 aa).

Ser25 serves as the catalytic Schiff-base intermediate with substrate; via pyruvic acid. Ser25 is subject to Pyruvic acid (Ser). Position 57 (Thr57) interacts with substrate. The active-site Proton donor is Tyr58. Position 73–75 (73–75 (GAA)) interacts with substrate.

The protein belongs to the PanD family. As to quaternary structure, heterooctamer of four alpha and four beta subunits. Pyruvate is required as a cofactor. Post-translationally, is synthesized initially as an inactive proenzyme, which is activated by self-cleavage at a specific serine bond to produce a beta-subunit with a hydroxyl group at its C-terminus and an alpha-subunit with a pyruvoyl group at its N-terminus.

The protein localises to the cytoplasm. The catalysed reaction is L-aspartate + H(+) = beta-alanine + CO2. The protein operates within cofactor biosynthesis; (R)-pantothenate biosynthesis; beta-alanine from L-aspartate: step 1/1. Functionally, catalyzes the pyruvoyl-dependent decarboxylation of aspartate to produce beta-alanine. The polypeptide is Aspartate 1-decarboxylase (Bacillus subtilis (strain 168)).